A 372-amino-acid polypeptide reads, in one-letter code: Queuine tRNA-ribosyltransferase (372 aa).

Catalysis depends on Asp92, which acts as the Proton acceptor. Substrate contacts are provided by residues 92 to 96 (DSGGY), Asp146, Gln188, and Gly215. Residues 246–252 (GIGSLRE) form an RNA binding region. The active-site Nucleophile is the Asp265. The segment at 270–274 (TRLGR) is RNA binding; important for wobble base 34 recognition. Residues Cys303, Cys305, Cys308, and His334 each coordinate Zn(2+).

The protein belongs to the queuine tRNA-ribosyltransferase family. As to quaternary structure, homodimer. Within each dimer, one monomer is responsible for RNA recognition and catalysis, while the other monomer binds to the replacement base PreQ1. Zn(2+) is required as a cofactor.

The enzyme catalyses 7-aminomethyl-7-carbaguanine + guanosine(34) in tRNA = 7-aminomethyl-7-carbaguanosine(34) in tRNA + guanine. It functions in the pathway tRNA modification; tRNA-queuosine biosynthesis. Catalyzes the base-exchange of a guanine (G) residue with the queuine precursor 7-aminomethyl-7-deazaguanine (PreQ1) at position 34 (anticodon wobble position) in tRNAs with GU(N) anticodons (tRNA-Asp, -Asn, -His and -Tyr). Catalysis occurs through a double-displacement mechanism. The nucleophile active site attacks the C1' of nucleotide 34 to detach the guanine base from the RNA, forming a covalent enzyme-RNA intermediate. The proton acceptor active site deprotonates the incoming PreQ1, allowing a nucleophilic attack on the C1' of the ribose to form the product. After dissociation, two additional enzymatic reactions on the tRNA convert PreQ1 to queuine (Q), resulting in the hypermodified nucleoside queuosine (7-(((4,5-cis-dihydroxy-2-cyclopenten-1-yl)amino)methyl)-7-deazaguanosine). This Prochlorococcus marinus (strain MIT 9215) protein is Queuine tRNA-ribosyltransferase.